A 492-amino-acid polypeptide reads, in one-letter code: Glutamyl-tRNA(Gln) amidotransferase subunit A (492 aa).

Catalysis depends on charge relay system residues lysine 78 and serine 158. Serine 182 functions as the Acyl-ester intermediate in the catalytic mechanism.

This sequence belongs to the amidase family. GatA subfamily. As to quaternary structure, heterotrimer of A, B and C subunits.

It catalyses the reaction L-glutamyl-tRNA(Gln) + L-glutamine + ATP + H2O = L-glutaminyl-tRNA(Gln) + L-glutamate + ADP + phosphate + H(+). Allows the formation of correctly charged Gln-tRNA(Gln) through the transamidation of misacylated Glu-tRNA(Gln) in organisms which lack glutaminyl-tRNA synthetase. The reaction takes place in the presence of glutamine and ATP through an activated gamma-phospho-Glu-tRNA(Gln). This Rickettsia akari (strain Hartford) protein is Glutamyl-tRNA(Gln) amidotransferase subunit A.